A 640-amino-acid chain; its full sequence is ATP-dependent DNA helicase YoaA (640 aa).

One can recognise a Helicase ATP-binding domain in the interval 16–278 (ELSQNIKGFR…KDMQQLGTTS (263 aa)). 51-58 (AGTGTGKT) provides a ligand contact to ATP. C114 serves as a coordination point for [4Fe-4S] cluster. Positions 125-128 (GVLG) match the DEAH box motif. Residues C174, C179, and C185 each coordinate [4Fe-4S] cluster. The DEAH box signature appears at 231 to 234 (DEAH). The Helicase C-terminal domain maps to 458–634 (SLGEILLPVI…SRTRDLNKVI (177 aa)).

It belongs to the helicase family. DinG subfamily. [4Fe-4S] cluster is required as a cofactor.

It carries out the reaction Couples ATP hydrolysis with the unwinding of duplex DNA at the replication fork by translocating in the 5'-3' direction. This creates two antiparallel DNA single strands (ssDNA). The leading ssDNA polymer is the template for DNA polymerase III holoenzyme which synthesizes a continuous strand.. The catalysed reaction is ATP + H2O = ADP + phosphate + H(+). Functionally, probably a 5'-3' DNA helicase. This Haemophilus influenzae (strain ATCC 51907 / DSM 11121 / KW20 / Rd) protein is ATP-dependent DNA helicase YoaA.